The following is a 732-amino-acid chain: Ferric aerobactin receptor (732 aa).

The first 25 residues, 1–25, serve as a signal peptide directing secretion; the sequence is MMISKKYTLWALNPLLLTMMAPAVA. The TonB box signature appears at 31-38; the sequence is ETFVVSAN. The region spanning 43–153 is the TBDR plug domain; sequence TVAEMAQTTW…TGGLINIVTK (111 aa). Residues 158–732 enclose the TBDR beta-barrel domain; it reads ETMMEFEAGT…TFGLNYSVLF (575 aa). The TonB C-terminal box motif lies at 715–732; sequence YDYKGRGRTFGLNYSVLF.

It belongs to the TonB-dependent receptor family.

It is found in the cell outer membrane. Receptor for cloacin DF13/aerobactin. In Escherichia coli, this protein is Ferric aerobactin receptor (iutA).